The following is a 124-amino-acid chain: Small ribosomal subunit protein uS12 (124 aa).

Asp89 carries the post-translational modification 3-methylthioaspartic acid. The tract at residues Thr104–Lys124 is disordered. Basic residues predominate over residues Gly111–Lys124.

The protein belongs to the universal ribosomal protein uS12 family. In terms of assembly, part of the 30S ribosomal subunit. Contacts proteins S8 and S17. May interact with IF1 in the 30S initiation complex.

Its function is as follows. With S4 and S5 plays an important role in translational accuracy. In terms of biological role, interacts with and stabilizes bases of the 16S rRNA that are involved in tRNA selection in the A site and with the mRNA backbone. Located at the interface of the 30S and 50S subunits, it traverses the body of the 30S subunit contacting proteins on the other side and probably holding the rRNA structure together. The combined cluster of proteins S8, S12 and S17 appears to hold together the shoulder and platform of the 30S subunit. The protein is Small ribosomal subunit protein uS12 of Micrococcus luteus (strain ATCC 4698 / DSM 20030 / JCM 1464 / CCM 169 / CCUG 5858 / IAM 1056 / NBRC 3333 / NCIMB 9278 / NCTC 2665 / VKM Ac-2230) (Micrococcus lysodeikticus).